Consider the following 313-residue polypeptide: Ribosomal protein L11 methyltransferase (313 aa).

S-adenosyl-L-methionine-binding residues include Thr-161, Gly-182, Asp-204, and Asn-247.

It belongs to the methyltransferase superfamily. PrmA family.

The protein resides in the cytoplasm. It carries out the reaction L-lysyl-[protein] + 3 S-adenosyl-L-methionine = N(6),N(6),N(6)-trimethyl-L-lysyl-[protein] + 3 S-adenosyl-L-homocysteine + 3 H(+). Its function is as follows. Methylates ribosomal protein L11. This Alkaliphilus oremlandii (strain OhILAs) (Clostridium oremlandii (strain OhILAs)) protein is Ribosomal protein L11 methyltransferase.